Consider the following 538-residue polypeptide: Carboxypeptidase 2 (538 aa).

The first 21 residues, 1–21 (MVAYRFLTLISLGLGSHCASA), serve as a signal peptide directing secretion. An N-linked (GlcNAc...) asparagine glycan is attached at asparagine 46. Residues 53 to 76 (PAFTSPGTVPRGFSDGTSGPTRDE) are disordered. The Peptidase M14 domain occupies 71-351 (GPTRDETMEG…VMVKSILQTA (281 aa)). Zn(2+) contacts are provided by histidine 136, glutamate 139, and histidine 224. The active-site Proton donor/acceptor is the glutamate 322. N-linked (GlcNAc...) asparagine glycosylation is found at asparagine 393 and asparagine 459.

It belongs to the peptidase M14 family. It depends on Zn(2+) as a cofactor.

It localises to the secreted. In terms of biological role, extracellular metalloprotease that contributes to pathogenicity. The chain is Carboxypeptidase 2 (MCPB) from Trichophyton equinum (Horse ringworm fungus).